The primary structure comprises 836 residues: Ethylene receptor 3 (836 aa).

3 helical membrane passes run 137–157 (LIAA…AGLR), 166–186 (LVQF…TAFT), and 204–224 (LTAL…PQLL). Residues Cys176 and His180 each contribute to the Cu cation site. A GAF domain is found at 269 to 413 (DRHTVLYTTL…VVAGQVAVAL (145 aa)). Residues 416–452 (ATLLEESRAMRDRLAEQNRELLQARRDALMANEARQA) are a coiled coil. The 235-residue stretch at 457 to 691 (MSQGMRRPIH…LVLRFQLQSP (235 aa)) folds into the Histidine kinase domain. One can recognise a Response regulatory domain in the interval 718–834 (LLIDDDDDIN…LKDELARILQ (117 aa)).

It belongs to the ethylene receptor family. The cofactor is Cu cation.

Its subcellular location is the endoplasmic reticulum membrane. It carries out the reaction ATP + protein L-histidine = ADP + protein N-phospho-L-histidine.. Its function is as follows. Ethylene receptor related to bacterial two-component regulators. Acts as a negative regulator of ethylene signaling. May delay the transition from the vegetative stage to the floral stage by up-regulating GI (GIGANTEA) and RCN1 and cause starch accumulation in stems by down-regulating the alpha-amylase AMY3D. The polypeptide is Ethylene receptor 3 (Oryza sativa subsp. indica (Rice)).